Here is a 94-residue protein sequence, read N- to C-terminus: Elongation factor 1-beta (94 aa).

This sequence belongs to the EF-1-beta/EF-1-delta family.

Its function is as follows. Promotes the exchange of GDP for GTP in EF-1-alpha/GDP, thus allowing the regeneration of EF-1-alpha/GTP that could then be used to form the ternary complex EF-1-alpha/GTP/AAtRNA. This is Elongation factor 1-beta from Ignicoccus hospitalis (strain KIN4/I / DSM 18386 / JCM 14125).